The following is a 327-amino-acid chain: L-lactate dehydrogenase (327 aa).

NAD(+) is bound by residues valine 18, aspartate 39, lysine 44, tyrosine 69, and 83-84; that span reads GA. Substrate is bound by residues glutamine 86, arginine 92, and 124 to 127; that span reads NPVD. Residues 122–124 and serine 147 each bind NAD(+); that span reads AAN. Substrate is bound at residue 152 to 155; the sequence is DSAR. Positions 157 and 172 each coordinate beta-D-fructose 1,6-bisphosphate. The active-site Proton acceptor is the histidine 179. Phosphotyrosine is present on tyrosine 224. Threonine 233 serves as a coordination point for substrate.

Belongs to the LDH/MDH superfamily. LDH family. As to quaternary structure, homotetramer.

Its subcellular location is the cytoplasm. The catalysed reaction is (S)-lactate + NAD(+) = pyruvate + NADH + H(+). Its pathway is fermentation; pyruvate fermentation to lactate; (S)-lactate from pyruvate: step 1/1. Allosterically activated by fructose 1,6-bisphosphate (FBP). Functionally, catalyzes the conversion of lactate to pyruvate. This chain is L-lactate dehydrogenase, found in Streptococcus equi subsp. equi (strain 4047).